Here is a 246-residue protein sequence, read N- to C-terminus: Mast cell protease 1 (246 aa).

The first 18 residues, 1–18 (MQALLFLMALLLPSGAGA), serve as a signal peptide directing secretion. The propeptide at 19–20 (EE) is activation peptide. Residues 21–244 (IIGGVEARPH…YVPWIKTVIN (224 aa)) enclose the Peptidase S1 domain. A disulfide bridge links Cys50 with Cys66. His65 acts as the Charge relay system in catalysis. The N-linked (GlcNAc...) asparagine glycan is linked to Asn102. Residue Asp109 is the Charge relay system of the active site. Disulfide bonds link Cys143–Cys208 and Cys174–Cys187. The active-site Charge relay system is Ser202.

The protein belongs to the peptidase S1 family. Granzyme subfamily. Mucosal mast cells.

The protein resides in the secreted. Its subcellular location is the cytoplasmic granule. Has a chymotrypsin-like activity. The chain is Mast cell protease 1 (Mcpt1) from Mus musculus (Mouse).